Reading from the N-terminus, the 74-residue chain is Psi-conotoxin PrIIIE (74 aa).

An N-terminal signal peptide occupies residues 1 to 19 (MSKLGVLLTICLLLFPITA). Positions 20 to 50 (LPVDGDQPADRPVERMQDNISSEQHPFFEKR) are excised as a propeptide. Cystine bridges form between Cys54–Cys66, Cys55–Cys71, and Cys61–Cys72. Residue Cys72 is modified to Cysteine amide.

This sequence belongs to the conotoxin M superfamily. Expressed by the venom duct.

The protein localises to the secreted. Its function is as follows. Psi-conotoxins act on postsynaptic membranes, and act as non-competitive antagonist of nicotinic acetylcholine receptors (nAChR). Reversibly inhibits both adult- and fetal-types nAChR. The inhibition potency against the adult- (alpha-1/beta-1/epsilon/delta) is higher than against the fetal-type (alpha-1/beta-1/gamma/delta). Induces flaccid paralysis in goldfish, but does not induce any remarkable behavior in mice and does not block action potential in directly stimulated frog muscle preparations. The polypeptide is Psi-conotoxin PrIIIE (Conus parius (Cone snail)).